Consider the following 644-residue polypeptide: Low affinity sulfate transporter 3 (644 aa).

The span at 1 to 19 shows a compositional bias: polar residues; sequence MSSLGTEQFSERSQWVLNS. Positions 1–20 are disordered; sequence MSSLGTEQFSERSQWVLNSP. A run of 13 helical transmembrane segments spans residues 50–70, 76–96, 99–119, 124–144, 156–176, 179–199, 242–262, 268–288, 328–348, 394–414, 418–438, 455–475, and 518–538; these read AVSFLASLFPILSWIRTYSAT, LLSGLTLASLSIPQSIGYANL, LDPQYGLYTSVIPPVIYALMG, IAIGPVAVVSMLLSSLVPKVI, LVFTVTLFAGIFQTAFGVLRL, LVDFLSHAALVGFMAGAAIVI, PLNFVIGCSFLIFLLAARFIG, FFWLPAIAPLLSVILSTLIVF, IGLISAIIALTEAIAVGRSFA, CKTAVSNIVMAVTVLLCLELF, LYYTPMAILASIILSALPGLI, LACLGAFFGVLFVSIEIGLLI, and PGILVIRISSGSLCFANAGFV. One can recognise an STAS domain in the interval 511–635; it reads YPMAVTTPGI…LTVAEAVDAC (125 aa).

It belongs to the SLC26A/SulP transporter (TC 2.A.53) family.

It is found in the membrane. Low-affinity H(+)/sulfate cotransporter which may be involved in the internal transport of sulfate between cellular or subcellular compartments within the plant. The sequence is that of Low affinity sulfate transporter 3 (ST3) from Stylosanthes hamata (Caribbean stylo).